Consider the following 257-residue polypeptide: 1-(5-phosphoribosyl)-5-[(5-phosphoribosylamino)methylideneamino] imidazole-4-carboxamide isomerase (257 aa).

The Proton acceptor role is filled by Asp-8. Asp-129 (proton donor) is an active-site residue.

It belongs to the HisA/HisF family.

The protein resides in the cytoplasm. The enzyme catalyses 1-(5-phospho-beta-D-ribosyl)-5-[(5-phospho-beta-D-ribosylamino)methylideneamino]imidazole-4-carboxamide = 5-[(5-phospho-1-deoxy-D-ribulos-1-ylimino)methylamino]-1-(5-phospho-beta-D-ribosyl)imidazole-4-carboxamide. It participates in amino-acid biosynthesis; L-histidine biosynthesis; L-histidine from 5-phospho-alpha-D-ribose 1-diphosphate: step 4/9. The polypeptide is 1-(5-phosphoribosyl)-5-[(5-phosphoribosylamino)methylideneamino] imidazole-4-carboxamide isomerase (Trichormus variabilis (strain ATCC 29413 / PCC 7937) (Anabaena variabilis)).